The chain runs to 121 residues: Small ribosomal subunit protein uS13 (121 aa).

The segment at 97–121 is disordered; the sequence is VRGQRTRTNARTRRGARKTVAGKKK. A compositionally biased stretch (basic residues) spans 100 to 121; it reads QRTRTNARTRRGARKTVAGKKK.

It belongs to the universal ribosomal protein uS13 family. Part of the 30S ribosomal subunit. Forms a loose heterodimer with protein S19. Forms two bridges to the 50S subunit in the 70S ribosome.

Located at the top of the head of the 30S subunit, it contacts several helices of the 16S rRNA. In the 70S ribosome it contacts the 23S rRNA (bridge B1a) and protein L5 of the 50S subunit (bridge B1b), connecting the 2 subunits; these bridges are implicated in subunit movement. Contacts the tRNAs in the A and P-sites. This Synechococcus sp. (strain CC9902) protein is Small ribosomal subunit protein uS13.